A 633-amino-acid chain; its full sequence is Threonine--tRNA ligase (633 aa).

The region spanning methionine 1 to threonine 61 is the TGS domain. Residues aspartate 242–proline 533 form a catalytic region. Cysteine 333, histidine 384, and histidine 510 together coordinate Zn(2+).

This sequence belongs to the class-II aminoacyl-tRNA synthetase family. In terms of assembly, homodimer. It depends on Zn(2+) as a cofactor.

The protein localises to the cytoplasm. The enzyme catalyses tRNA(Thr) + L-threonine + ATP = L-threonyl-tRNA(Thr) + AMP + diphosphate + H(+). Functionally, catalyzes the attachment of threonine to tRNA(Thr) in a two-step reaction: L-threonine is first activated by ATP to form Thr-AMP and then transferred to the acceptor end of tRNA(Thr). Also edits incorrectly charged L-seryl-tRNA(Thr). This Rickettsia bellii (strain OSU 85-389) protein is Threonine--tRNA ligase.